The chain runs to 187 residues: Putative adenylate kinase (187 aa).

ATP-binding residues include Gly10, Gly12, Lys13, Thr14, and Val15. The interval 30 to 53 is NMP; it reads SLSQFVIENKLYTEYDELRQSYII. Residues 103 to 113 form an LID region; sequence GRGWADIKVAE. Arg104 contributes to the ATP binding site.

Belongs to the adenylate kinase family. AK6 subfamily. In terms of assembly, interacts with uS11. Not a structural component of 40S pre-ribosomes, but transiently interacts with them by binding to uS11.

The enzyme catalyses AMP + ATP = 2 ADP. The catalysed reaction is ATP + H2O = ADP + phosphate + H(+). Broad-specificity nucleoside monophosphate (NMP) kinase that catalyzes the reversible transfer of the terminal phosphate group between nucleoside triphosphates and monophosphates. Also has ATPase activity. Involved in the late maturation steps of the 30S ribosomal particles, specifically 16S rRNA maturation. While NMP activity is not required for ribosome maturation, ATPase activity is. Associates transiently with small ribosomal subunit protein uS11. ATP hydrolysis breaks the interaction with uS11. May temporarily remove uS11 from the ribosome to enable a conformational change of the ribosomal RNA that is needed for the final maturation step of the small ribosomal subunit. The polypeptide is Putative adenylate kinase (Saccharolobus islandicus (strain M.16.4 / Kamchatka #3) (Sulfolobus islandicus)).